We begin with the raw amino-acid sequence, 375 residues long: Stomatin-2 (375 aa).

The tract at residues 1–75 (MKTQPSEESA…IPVPTGQPRG (75 aa)) is disordered. The span at 11–50 (SPAPVNPGNSGNSGNRRASSTRISFSDQLDGGDSGDSSSN) shows a compositional bias: low complexity. Residues 120–140 (GLGFCGWFLMGLSWIMVISTF) form a helical membrane-spanning segment.

Belongs to the band 7/mec-2 family.

The protein resides in the membrane. May be involved in cilia-related function. The sequence is that of Stomatin-2 (sto-2) from Caenorhabditis elegans.